Reading from the N-terminus, the 203-residue chain is Ribonuclease T (203 aa).

The Exonuclease domain occupies 11–185 (VVVDVETGGF…YDTEKTAELF (175 aa)). Mg(2+) contacts are provided by aspartate 14, glutamate 16, histidine 172, and aspartate 177. The active-site Proton donor/acceptor is the histidine 172.

The protein belongs to the RNase T family. In terms of assembly, homodimer. Requires Mg(2+) as cofactor.

Functionally, trims short 3' overhangs of a variety of RNA species, leaving a one or two nucleotide 3' overhang. Responsible for the end-turnover of tRNA: specifically removes the terminal AMP residue from uncharged tRNA (tRNA-C-C-A). Also appears to be involved in tRNA biosynthesis. The polypeptide is Ribonuclease T (Pseudomonas putida (strain ATCC 47054 / DSM 6125 / CFBP 8728 / NCIMB 11950 / KT2440)).